The chain runs to 132 residues: Small ribosomal subunit protein uS8 (132 aa).

The protein belongs to the universal ribosomal protein uS8 family. As to quaternary structure, part of the 30S ribosomal subunit. Contacts proteins S5 and S12.

Functionally, one of the primary rRNA binding proteins, it binds directly to 16S rRNA central domain where it helps coordinate assembly of the platform of the 30S subunit. This is Small ribosomal subunit protein uS8 from Ehrlichia chaffeensis (strain ATCC CRL-10679 / Arkansas).